We begin with the raw amino-acid sequence, 662 residues long: Polyunsaturated fatty acid lipoxygenase ALOX15 (662 aa).

Residues 2–114 (GLYRIRVSTG…VLSLPEGTGR (113 aa)) enclose the PLAT domain. Residues 115 to 662 (TVGDDPQGLF…PSIVENSVAI (548 aa)) form the Lipoxygenase domain. Fe cation is bound by residues histidine 360, histidine 365, histidine 540, histidine 544, and isoleucine 662.

It belongs to the lipoxygenase family. In terms of assembly, interacts with PEBP1; in response to IL13/interleukin-13, prevents the interaction of PEBP1 with RAF1 to activate the ERK signaling cascade. The cofactor is Fe cation.

Its subcellular location is the cytoplasm. The protein localises to the cytosol. The protein resides in the cell membrane. It is found in the lipid droplet. The catalysed reaction is (5Z,8Z,11Z,14Z)-eicosatetraenoate + O2 = (12S)-hydroperoxy-(5Z,8Z,10E,14Z)-eicosatetraenoate. The enzyme catalyses (9Z,12Z)-octadecadienoate + O2 = (13S)-hydroperoxy-(9Z,11E)-octadecadienoate. It carries out the reaction (5Z,8Z,11Z,14Z)-eicosatetraenoate + O2 = (15S)-hydroperoxy-(5Z,8Z,11Z,13E)-eicosatetraenoate. It catalyses the reaction (5Z,8Z,11Z,14Z)-eicosatetraenoate + 2 O2 = (14R,15S)-dihydroperoxy-(5Z,8Z,10E,12E)-eicosatetraenoate. The catalysed reaction is (5Z,8Z,11Z,14Z)-eicosatetraenoate + 2 O2 = (8S,15S)-dihydroperoxy-(5Z,9E,11Z,13E)-eicosatetraenoate. The enzyme catalyses (14S,15R)-epoxy-(5Z,8Z,11Z)-eicosatrienoate + O2 = (8S)-hydroperoxy-(14S,15R)-epoxy-(5Z,9E,11Z)-eicosatrienoate. It carries out the reaction (14S,15R)-epoxy-(5Z,8Z,11Z)-eicosatrienoate + O2 = (12S)-hydroperoxy-(14S,15R)-epoxy-(5Z,8Z,10E)-eicosatrienoate. It catalyses the reaction (14R,15S)-epoxy-(5Z,8Z,11Z)-eicosatrienoate + O2 = (5S)-hydroperoxy-(14R,15S)-epoxy-(6E,8Z,11Z)-eicosatrienoate. The catalysed reaction is (14R,15S)-epoxy-(5Z,8Z,11Z)-eicosatrienoate + O2 = (12S)-hydroperoxy-(14R,15S)-epoxy-(5Z,8Z,10E)-eicosatrienoate. The enzyme catalyses (15R)-hydroperoxy-(5Z,8Z,11Z,13E)-eicosatetraenoate = 15-oxo-(5Z,8Z,11Z,13E)-eicosatetraenoate + H2O. It carries out the reaction (15S)-hydroperoxy-(5Z,8Z,11Z,13E)-eicosatetraenoate = (14S,15S)-epoxy-(5Z,8Z,10E,12E)-eicosatetraenoate + H2O. It catalyses the reaction (12S)-hydroperoxy-(5Z,8Z,10E,14Z)-eicosatetraenoate = (8S)-hydroxy-(11S,12S)-epoxy-(5Z,9E,14Z)-eicosatrienoate. The catalysed reaction is (4Z,7Z,10Z,13Z,16Z)-docosapentaenoate + O2 = 14-hydroperoxy-(4Z,7Z,10Z,12E,16Z)-docosapentaenoate. The enzyme catalyses (7Z,10Z,13Z,16Z,19Z)-docosapentaenoate + O2 = 14-hydroperoxy-(7Z,10Z,12E,16Z,19Z)-docosapentaenoate. It carries out the reaction (4Z,7Z,10Z,13Z,16Z,19Z)-docosahexaenoate + O2 = (14S)-hydroperoxy-(4Z,7Z,10Z,12E,16Z,19Z)-docosahexaenoate. It catalyses the reaction (4Z,7Z,10Z,13Z,16Z,19Z)-docosahexaenoate + O2 = (17S)-hydroperoxy-(4Z,7Z,10Z,13Z,15E,19Z)-docosahexaenoate. The catalysed reaction is (7S)-hydroperoxy-(4Z,8E,10Z,13Z,16Z,19Z)-docosahexaenoate + O2 = (7S,14S)-dihydroperoxy-(4Z,8E,10Z,12E,16Z,19Z)-docosahexaenoate. The enzyme catalyses (7S)-hydroperoxy-(4Z,8E,10Z,13Z,16Z,19Z)-docosahexaenoate + O2 = (7S,17S)-dihydroperoxy-(4Z,8E,10Z,13Z,15E,19Z)-docosahexaenoate. It carries out the reaction (4Z,7Z,10Z,13Z,16Z,19Z)-docosahexaenoate + O2 = (11S)-hydroperoxy-(4Z,7Z,9E,13Z,16Z,19Z)-docosahexaenoate. It catalyses the reaction N-(5Z,8Z,11Z,14Z)-eicosatetraenoyl-taurine + O2 = N-(12S)-hydroperoxy-(5Z,8Z,10E,14Z)-eicosatetraenoyl-taurine. The catalysed reaction is N-(5Z,8Z,11Z,14Z)-eicosatetraenoyl-gamma-aminobutanoate + O2 = N-(12S)-hydroperoxy-(5Z,8Z,10E,14Z)-eicosatetraenoyl-gamma-aminobutanoate. The enzyme catalyses N-(5Z,8Z,11Z,14Z)-eicosatetraenoyl-glycine + O2 = N-(12S)-hydroperoxy-(5Z,8Z,10E,14Z)-eicosatetraenoyl-glycine. It carries out the reaction N-(5Z,8Z,11Z,14Z)-eicosatetraenoyl-L-alanine + O2 = N-(12S)-hydroperoxy-(5Z,8Z,10E,14Z)-eicosatetraenoyl-alanine. It catalyses the reaction N-(5Z,8Z,11Z,14Z)-eicosatetraenoyl-taurine + O2 = N-(15S)-hydroperoxy-(5Z,8Z,11Z,13E)-eicosatetraenoyl-taurine. The catalysed reaction is N-(5Z,8Z,11Z,14Z)-eicosatetraenoyl-gamma-aminobutanoate + O2 = N-(15S)-hydroperoxy-(5Z,8Z,11Z,13E)-eicosatetraenoyl-gamma-aminobutanoate. The enzyme catalyses N-(5Z,8Z,11Z,14Z)-eicosatetraenoyl-glycine + O2 = N-(15S)-hydroperoxy-(5Z,8Z,11Z,13E)-eicosatetraenoyl-glycine. It carries out the reaction N-(5Z,8Z,11Z,14Z)-eicosatetraenoyl-L-alanine + O2 = N-(15S)-hydroperoxy-(5Z,8Z,11Z,13E)-eicosatetraenoyl-alanine. It functions in the pathway lipid metabolism; hydroperoxy eicosatetraenoic acid biosynthesis. In terms of biological role, non-heme iron-containing dioxygenase that catalyzes the stereo-specific peroxidation of free and esterified polyunsaturated fatty acids generating a spectrum of bioactive lipid mediators. It inserts peroxyl groups at C12 or C15 of arachidonate ((5Z,8Z,11Z,14Z)-eicosatetraenoate) producing both 12-hydroperoxyeicosatetraenoate/12-HPETE and 15-hydroperoxyeicosatetraenoate/15-HPETE. It may then act on 12-HPETE to produce hepoxilins, which may show pro-inflammatory properties. Can also peroxidize linoleate ((9Z,12Z)-octadecadienoate) to 13-hydroperoxyoctadecadienoate. May participate in the sequential oxidations of DHA ((4Z,7Z,10Z,13Z,16Z,19Z)-docosahexaenoate) to generate specialized pro-resolving mediators (SPMs)like resolvin D5 ((7S,17S)-diHPDHA) and (7S,14S)-diHPDHA, that actively down-regulate the immune response and have anti-aggregation properties with platelets. Can convert epoxy fatty acids to hydroperoxy-epoxides derivatives followed by an intramolecular nucleophilic substitution leading to the formation of monocyclic endoperoxides. Plays an important role during the maintenance of self-tolerance by peroxidizing membrane-bound phosphatidylethanolamine which can then signal the sorting process for clearance of apoptotic cells during inflammation and prevent an autoimmune response. In addition to its role in the immune and inflammatory responses, this enzyme may play a role in epithelial wound healing in the cornea through production of lipoxin A4 (LXA(4)) and docosahexaenoic acid-derived neuroprotectin D1 (NPD1; 10R,17S-HDHA), both lipid autacoids exhibit anti-inflammatory and neuroprotective properties. Furthermore, it may regulate actin polymerization which is crucial for several biological processes such as the phagocytosis of apoptotic cells. It is also implicated in the generation of endogenous ligands for peroxisome proliferator activated receptor (PPAR-gamma), hence modulating macrophage development and function. It may also exert a negative effect on skeletal development by regulating bone mass through this pathway. As well as participates in ER stress and downstream inflammation in adipocytes, pancreatic islets, and liver. Finally, it is also involved in the cellular response to IL13/interleukin-13. The protein is Polyunsaturated fatty acid lipoxygenase ALOX15 of Pongo abelii (Sumatran orangutan).